The following is a 27-amino-acid chain: uncharacterized protein (27 aa).

The protein resides in the mitochondrion. This is an uncharacterized protein from Emericella nidulans (Aspergillus nidulans).